The sequence spans 136 residues: MLQPKRTKFRKTFKGRNRGLANGTDVSFGTFGLKAVGRGRLTARQIEAARRAMTRHVKRQGQIWIRVFPDKPITSKPLEVRQGKGKGNVEYWVAQIQPGKVLYEMDGVPEVLAREAFNLAARKLPIKTTFVIKAVM.

Belongs to the universal ribosomal protein uL16 family. Part of the 50S ribosomal subunit.

In terms of biological role, binds 23S rRNA and is also seen to make contacts with the A and possibly P site tRNAs. The protein is Large ribosomal subunit protein uL16 of Photobacterium profundum (strain SS9).